Here is a 130-residue protein sequence, read N- to C-terminus: Small ribosomal subunit protein uS8A (130 aa).

Belongs to the universal ribosomal protein uS8 family. In terms of assembly, component of the small ribosomal subunit (SSU). Mature ribosomes consist of a small (40S) and a large (60S) subunit. The 40S subunit contains about 32 different proteins and 1 molecule of RNA (18S). The 60S subunit contains 45 different proteins and 3 molecules of RNA (25S, 5.8S and 5S).

The protein resides in the cytoplasm. In terms of biological role, component of the ribosome, a large ribonucleoprotein complex responsible for the synthesis of proteins in the cell. The small ribosomal subunit (SSU) binds messenger RNAs (mRNAs) and translates the encoded message by selecting cognate aminoacyl-transfer RNA (tRNA) molecules. The large subunit (LSU) contains the ribosomal catalytic site termed the peptidyl transferase center (PTC), which catalyzes the formation of peptide bonds, thereby polymerizing the amino acids delivered by tRNAs into a polypeptide chain. The nascent polypeptides leave the ribosome through a tunnel in the LSU and interact with protein factors that function in enzymatic processing, targeting, and the membrane insertion of nascent chains at the exit of the ribosomal tunnel. This Candida albicans (strain SC5314 / ATCC MYA-2876) (Yeast) protein is Small ribosomal subunit protein uS8A (RPS22A).